The chain runs to 62 residues: Beta-defensin 10 (62 aa).

An N-terminal signal peptide occupies residues 1–22; it reads MRLHHLLLLLLLVVLSSGSGFT. Pyrrolidone carboxylic acid is present on Gln-23. Disulfide bonds link Cys-31-Cys-60, Cys-38-Cys-53, and Cys-43-Cys-61.

This sequence belongs to the beta-defensin family. Neutrophilic granules.

It localises to the secreted. Its function is as follows. Has bactericidal activity. Active against E.coli ML35 and S.aureus 502A. This is Beta-defensin 10 (DEFB10) from Bos taurus (Bovine).